A 183-amino-acid polypeptide reads, in one-letter code: ATP synthase subunit b, chloroplastic (183 aa).

The chain crosses the membrane as a helical span at residues 27–49 (LATNLINLTVVVGVLIYFGKGVL).

Belongs to the ATPase B chain family. As to quaternary structure, F-type ATPases have 2 components, F(1) - the catalytic core - and F(0) - the membrane proton channel. F(1) has five subunits: alpha(3), beta(3), gamma(1), delta(1), epsilon(1). F(0) has four main subunits: a(1), b(1), b'(1) and c(10-14). The alpha and beta chains form an alternating ring which encloses part of the gamma chain. F(1) is attached to F(0) by a central stalk formed by the gamma and epsilon chains, while a peripheral stalk is formed by the delta, b and b' chains.

Its subcellular location is the plastid. The protein localises to the chloroplast thylakoid membrane. Its function is as follows. F(1)F(0) ATP synthase produces ATP from ADP in the presence of a proton or sodium gradient. F-type ATPases consist of two structural domains, F(1) containing the extramembraneous catalytic core and F(0) containing the membrane proton channel, linked together by a central stalk and a peripheral stalk. During catalysis, ATP synthesis in the catalytic domain of F(1) is coupled via a rotary mechanism of the central stalk subunits to proton translocation. Component of the F(0) channel, it forms part of the peripheral stalk, linking F(1) to F(0). This chain is ATP synthase subunit b, chloroplastic, found in Oryza nivara (Indian wild rice).